Here is a 326-residue protein sequence, read N- to C-terminus: Metal-binding protein YtgA (326 aa).

Positions 1–21 (MSFFHTRKYKLILRGLLCLAG) are cleaved as a signal peptide. The Fe(2+) site is built by His75, His141, His207, and Asp299.

Belongs to the bacterial solute-binding protein 9 family. In terms of assembly, monomer.

It is found in the periplasm. In terms of biological role, part of the ATP-binding cassette (ABC) transport system YtgABCD involved in metal import. Binds Fe(2+), Mn(2+) and Ni(2+), with a preference for Fe(2+) and delivers them to the membrane permease for translocation into the cytoplasm. In Chlamydia trachomatis serovar D (strain ATCC VR-885 / DSM 19411 / UW-3/Cx), this protein is Metal-binding protein YtgA.